The primary structure comprises 139 residues: uncharacterized protein (139 aa).

This is an uncharacterized protein from Galliformes (FAdV-1).